Consider the following 541-residue polypeptide: 2-succinyl-5-enolpyruvyl-6-hydroxy-3-cyclohexene-1-carboxylate synthase (541 aa).

This sequence belongs to the TPP enzyme family. MenD subfamily. In terms of assembly, homodimer. It depends on Mg(2+) as a cofactor. The cofactor is Mn(2+). Requires thiamine diphosphate as cofactor.

It carries out the reaction isochorismate + 2-oxoglutarate + H(+) = 5-enolpyruvoyl-6-hydroxy-2-succinyl-cyclohex-3-ene-1-carboxylate + CO2. It functions in the pathway quinol/quinone metabolism; 1,4-dihydroxy-2-naphthoate biosynthesis; 1,4-dihydroxy-2-naphthoate from chorismate: step 2/7. The protein operates within quinol/quinone metabolism; menaquinone biosynthesis. Its function is as follows. Catalyzes the thiamine diphosphate-dependent decarboxylation of 2-oxoglutarate and the subsequent addition of the resulting succinic semialdehyde-thiamine pyrophosphate anion to isochorismate to yield 2-succinyl-5-enolpyruvyl-6-hydroxy-3-cyclohexene-1-carboxylate (SEPHCHC). The chain is 2-succinyl-5-enolpyruvyl-6-hydroxy-3-cyclohexene-1-carboxylate synthase from Leuconostoc mesenteroides subsp. mesenteroides (strain ATCC 8293 / DSM 20343 / BCRC 11652 / CCM 1803 / JCM 6124 / NCDO 523 / NBRC 100496 / NCIMB 8023 / NCTC 12954 / NRRL B-1118 / 37Y).